We begin with the raw amino-acid sequence, 403 residues long: Coenzyme A biosynthesis bifunctional protein CoaBC (403 aa).

The segment at 1–197 is phosphopantothenoylcysteine decarboxylase; sequence MISEIMHPTK…GNNLKKEGNR (197 aa). The tract at residues 198-403 is phosphopantothenate--cysteine ligase; the sequence is VLILNGGTVE…VEKVKKLVKS (206 aa). CTP contacts are provided by Asp-285, Lys-294, and Phe-327.

In the N-terminal section; belongs to the HFCD (homo-oligomeric flavin containing Cys decarboxylase) superfamily. It in the C-terminal section; belongs to the PPC synthetase family. As to quaternary structure, homododecamer. The CoaC domain is responsible for dodecamer formation. Mg(2+) serves as cofactor. Requires FMN as cofactor.

The catalysed reaction is N-[(R)-4-phosphopantothenoyl]-L-cysteine + H(+) = (R)-4'-phosphopantetheine + CO2. It catalyses the reaction (R)-4'-phosphopantothenate + L-cysteine + CTP = N-[(R)-4-phosphopantothenoyl]-L-cysteine + CMP + diphosphate + H(+). It functions in the pathway cofactor biosynthesis; coenzyme A biosynthesis. In terms of biological role, catalyzes two sequential steps in the biosynthesis of coenzyme A. In the first step cysteine is conjugated to 4'-phosphopantothenate to form 4-phosphopantothenoylcysteine. In the second step the latter compound is decarboxylated to form 4'-phosphopantotheine. This Methanocaldococcus jannaschii (strain ATCC 43067 / DSM 2661 / JAL-1 / JCM 10045 / NBRC 100440) (Methanococcus jannaschii) protein is Coenzyme A biosynthesis bifunctional protein CoaBC.